The chain runs to 206 residues: dCTP deaminase, dUMP-forming (206 aa).

DCTP contacts are provided by residues 117–122 (RSSFGR), Asp135, 143–145 (TLE), Gln163, Tyr177, Lys184, and Gln188. Glu145 functions as the Proton donor/acceptor in the catalytic mechanism.

The protein belongs to the dCTP deaminase family. As to quaternary structure, homotrimer.

It catalyses the reaction dCTP + 2 H2O = dUMP + NH4(+) + diphosphate. It functions in the pathway pyrimidine metabolism; dUMP biosynthesis; dUMP from dCTP: step 1/1. Functionally, bifunctional enzyme that catalyzes both the deamination of dCTP to dUTP and the hydrolysis of dUTP to dUMP without releasing the toxic dUTP intermediate. This Methanococcus maripaludis (strain C7 / ATCC BAA-1331) protein is dCTP deaminase, dUMP-forming.